The primary structure comprises 245 residues: Chromosome partition protein MukE (245 aa).

The segment at 213-245 (PESIAAEKATADDESAVSNEEDFEYDDNQEGAE) is disordered. The span at 224–245 (DDESAVSNEEDFEYDDNQEGAE) shows a compositional bias: acidic residues.

This sequence belongs to the MukE family. Interacts, and probably forms a ternary complex, with MukF and MukB. The complex formation is stimulated by calcium or magnesium.

The protein resides in the cytoplasm. Its subcellular location is the nucleoid. Functionally, involved in chromosome condensation, segregation and cell cycle progression. May participate in facilitating chromosome segregation by condensation DNA from both sides of a centrally located replisome during cell division. Probably acts via its interaction with MukB and MukF. The protein is Chromosome partition protein MukE of Actinobacillus succinogenes (strain ATCC 55618 / DSM 22257 / CCUG 43843 / 130Z).